The following is a 452-amino-acid chain: Trigger factor (452 aa).

The PPIase FKBP-type domain occupies 171-256 (GDRVTVSFKG…ATKLEAPQET (86 aa)).

The protein belongs to the FKBP-type PPIase family. Tig subfamily.

Its subcellular location is the cytoplasm. It catalyses the reaction [protein]-peptidylproline (omega=180) = [protein]-peptidylproline (omega=0). Its function is as follows. Involved in protein export. Acts as a chaperone by maintaining the newly synthesized protein in an open conformation. Functions as a peptidyl-prolyl cis-trans isomerase. The protein is Trigger factor of Rhodopseudomonas palustris (strain ATCC BAA-98 / CGA009).